Reading from the N-terminus, the 153-residue chain is Myosin regulatory light chain, smooth muscle (153 aa).

EF-hand domains lie at 12–47 (SQIQ…LGRG), 81–116 (DPEE…QADR), and 117–152 (FSQS…GQEE). Ca(2+)-binding residues include D25, N27, D29, and D36.

Its function is as follows. In molluscan muscle, calcium regulation is associated with myosin rather than with actin. Muscle myosin contains two types of light chains: the catalytic light chain, essential for ATPase activity, and the regulatory light chain, a calcium-binding protein responsible for Ca(2+) dependent binding and Ca(2+) dependent Mg-ATPase activity. The sequence is that of Myosin regulatory light chain, smooth muscle from Halocynthia roretzi (Sea squirt).